The sequence spans 123 residues: Insulin-like peptide-1 (123 aa).

The N-terminal stretch at 1-24 is a signal peptide; the sequence is MTTSSYFLLVALGLLLYVCQSSFG. 4 cysteine pairs are disulfide-bonded: Cys-29–Cys-106, Cys-41–Cys-109, Cys-53–Cys-122, and Cys-108–Cys-113. Pro-34 bears the 4-hydroxyproline; partial mark. Positions 59–102 are cleaved as a propeptide — c peptide; that stretch reads EQGGANNARAYTGRTSSLMKRRGFLSLLKKRGKRDEGSLQRSGR. 4-carboxyglutamate is present on Glu-107. Glu-117 carries the 4-carboxyglutamate; partial modification.

This sequence belongs to the insulin family. Heterodimer of A and B chains; disulfide-linked. As to expression, expressed by the venom duct.

It localises to the secreted. This venom insulin facilitates prey capture by rapidly inducing hypoglycemic shock. Intraperitoneal injection of this peptide into zebrafish lowers blood glucose with the same potency than human insulin. In vivo, when applied to water, this peptide reduces overall locomotor activity of zebrafish larvae, observed as a significant decrease in the percentage of time spent swimming and movement frequency. The sequence is that of Insulin-like peptide-1 from Conus victoriae (Queen Victoria cone).